We begin with the raw amino-acid sequence, 89 residues long: OMEGA-ectatommitoxin(02)-Rm1a (89 aa).

The first 30 residues, 1 to 30 (MKDSYISIVIAYLMVTFILVSSMPIEGEKG), serve as a signal peptide directing secretion. Cystine bridges form between Cys-39–Cys-52, Cys-47–Cys-68, and Cys-70–Cys-79. Positions 43–80 (YANYCFNGKCVHVVAQDEPGKPCYSCICDKFYIGKRCG) constitute an EGF-like domain.

This sequence belongs to the EGF domain peptide family. As to expression, expressed by the venom gland.

It localises to the secreted. Its function is as follows. Ant peptide with probable defensive activity which acts as a potent agonist of the mammalian epidermal growth factor receptor (EGFR). Mimics, both structurally and functionally, vertebrate epidermal growth factor (EGF) peptide hormones. In vivo, intraplantar injection in mice causes long-lasting (several days) hypersensitivity of the injected paw to both mechanical and thermal stimuli. Its long-lasting effect is unusual for venom toxins whose effects are usually immediate. One possible explanation is that it would reduce the duration of a nest attack, discourage future attacks, or enhance the actions of subsequent exposure to other pain-inducing venom peptides. This chain is OMEGA-ectatommitoxin(02)-Rm1a, found in Rhytidoponera metallica (Australian green-headed ant).